The chain runs to 724 residues: DNA ligase (724 aa).

NAD(+)-binding positions include 44–48 (DADYD), 93–94 (SL), and glutamate 127. Lysine 129 functions as the N6-AMP-lysine intermediate in the catalytic mechanism. Residues arginine 150, glutamate 186, lysine 307, and lysine 331 each contribute to the NAD(+) site. Zn(2+) is bound by residues cysteine 437, cysteine 440, cysteine 461, and cysteine 467. Positions 646–724 (TEGSPVAGKT…EDEWLALIGG (79 aa)) constitute a BRCT domain.

This sequence belongs to the NAD-dependent DNA ligase family. LigA subfamily. Mg(2+) is required as a cofactor. Requires Mn(2+) as cofactor.

It catalyses the reaction NAD(+) + (deoxyribonucleotide)n-3'-hydroxyl + 5'-phospho-(deoxyribonucleotide)m = (deoxyribonucleotide)n+m + AMP + beta-nicotinamide D-nucleotide.. In terms of biological role, DNA ligase that catalyzes the formation of phosphodiester linkages between 5'-phosphoryl and 3'-hydroxyl groups in double-stranded DNA using NAD as a coenzyme and as the energy source for the reaction. It is essential for DNA replication and repair of damaged DNA. This is DNA ligase from Agrobacterium fabrum (strain C58 / ATCC 33970) (Agrobacterium tumefaciens (strain C58)).